The following is a 434-amino-acid chain: ATP-dependent RNA helicase sub2 (434 aa).

Residues 59–87 (TGFRDFLLKGELLRAITDCGFEHPSEVQQ) carry the Q motif motif. Residues 90-265 (IPTAILNVDV…KKFMRNPLEV (176 aa)) form the Helicase ATP-binding domain. Residue 103–110 (AKSGLGKT) participates in ATP binding. A DECD box motif is present at residues 212–215 (DECD). One can recognise a Helicase C-terminal domain in the interval 293–430 (KLNELLDSLE…EYPEEGVDSS (138 aa)).

Belongs to the DEAD box helicase family. DECD subfamily.

It is found in the nucleus. It catalyses the reaction ATP + H2O = ADP + phosphate + H(+). ATP-binding RNA helicase involved in transcription elongation and required for the export of mRNA out of the nucleus. SUB2 also plays a role in pre-mRNA splicing and spliceosome assembly. May be involved in rDNA and telomeric silencing, and maintenance of genome integrity. This Emericella nidulans (strain FGSC A4 / ATCC 38163 / CBS 112.46 / NRRL 194 / M139) (Aspergillus nidulans) protein is ATP-dependent RNA helicase sub2 (sub2).